The chain runs to 244 residues: DNA repair protein RecO (244 aa).

The protein belongs to the RecO family.

Involved in DNA repair and RecF pathway recombination. This is DNA repair protein RecO from Nocardioides sp. (strain ATCC BAA-499 / JS614).